A 236-amino-acid chain; its full sequence is Phosphoribosylaminoimidazole-succinocarboxamide synthase (236 aa).

Belongs to the SAICAR synthetase family.

It carries out the reaction 5-amino-1-(5-phospho-D-ribosyl)imidazole-4-carboxylate + L-aspartate + ATP = (2S)-2-[5-amino-1-(5-phospho-beta-D-ribosyl)imidazole-4-carboxamido]succinate + ADP + phosphate + 2 H(+). Its pathway is purine metabolism; IMP biosynthesis via de novo pathway; 5-amino-1-(5-phospho-D-ribosyl)imidazole-4-carboxamide from 5-amino-1-(5-phospho-D-ribosyl)imidazole-4-carboxylate: step 1/2. This Pseudomonas putida (strain W619) protein is Phosphoribosylaminoimidazole-succinocarboxamide synthase.